Reading from the N-terminus, the 237-residue chain is Phosphoribosylaminoimidazole-succinocarboxamide synthase (237 aa).

Belongs to the SAICAR synthetase family.

The catalysed reaction is 5-amino-1-(5-phospho-D-ribosyl)imidazole-4-carboxylate + L-aspartate + ATP = (2S)-2-[5-amino-1-(5-phospho-beta-D-ribosyl)imidazole-4-carboxamido]succinate + ADP + phosphate + 2 H(+). Its pathway is purine metabolism; IMP biosynthesis via de novo pathway; 5-amino-1-(5-phospho-D-ribosyl)imidazole-4-carboxamide from 5-amino-1-(5-phospho-D-ribosyl)imidazole-4-carboxylate: step 1/2. This is Phosphoribosylaminoimidazole-succinocarboxamide synthase from Escherichia coli O127:H6 (strain E2348/69 / EPEC).